Reading from the N-terminus, the 185-residue chain is Threonylcarbamoyl-AMP synthase (185 aa).

Residues 4–185 form the YrdC-like domain; the sequence is SFRAQCAARV…LVTGQVIRPA (182 aa).

It belongs to the SUA5 family. TsaC subfamily.

The protein localises to the cytoplasm. The catalysed reaction is L-threonine + hydrogencarbonate + ATP = L-threonylcarbamoyladenylate + diphosphate + H2O. Its function is as follows. Required for the formation of a threonylcarbamoyl group on adenosine at position 37 (t(6)A37) in tRNAs that read codons beginning with adenine. Catalyzes the conversion of L-threonine, HCO(3)(-)/CO(2) and ATP to give threonylcarbamoyl-AMP (TC-AMP) as the acyladenylate intermediate, with the release of diphosphate. The polypeptide is Threonylcarbamoyl-AMP synthase (Pseudomonas aeruginosa (strain UCBPP-PA14)).